The primary structure comprises 283 residues: Bifunctional protein FolD (283 aa).

NADP(+)-binding positions include 165–167 (GRS), Ser-190, and Val-231.

It belongs to the tetrahydrofolate dehydrogenase/cyclohydrolase family. In terms of assembly, homodimer.

It catalyses the reaction (6R)-5,10-methylene-5,6,7,8-tetrahydrofolate + NADP(+) = (6R)-5,10-methenyltetrahydrofolate + NADPH. The catalysed reaction is (6R)-5,10-methenyltetrahydrofolate + H2O = (6R)-10-formyltetrahydrofolate + H(+). It participates in one-carbon metabolism; tetrahydrofolate interconversion. In terms of biological role, catalyzes the oxidation of 5,10-methylenetetrahydrofolate to 5,10-methenyltetrahydrofolate and then the hydrolysis of 5,10-methenyltetrahydrofolate to 10-formyltetrahydrofolate. This chain is Bifunctional protein FolD, found in Anoxybacillus flavithermus (strain DSM 21510 / WK1).